The sequence spans 113 residues: Hydrogenase maturation factor HypA (113 aa).

His-2 lines the Ni(2+) pocket. 4 residues coordinate Zn(2+): Cys-73, Cys-76, Cys-89, and Cys-92.

This sequence belongs to the HypA/HybF family.

Involved in the maturation of [NiFe] hydrogenases. Required for nickel insertion into the metal center of the hydrogenase. This is Hydrogenase maturation factor HypA from Aeromonas hydrophila subsp. hydrophila (strain ATCC 7966 / DSM 30187 / BCRC 13018 / CCUG 14551 / JCM 1027 / KCTC 2358 / NCIMB 9240 / NCTC 8049).